The primary structure comprises 647 residues: Meiotically up-regulated protein C8C9.04 (647 aa).

2 disordered regions span residues 1 to 241 and 387 to 647; these read MTTN…ELKP and RAQQ…KLFH. The span at 29-46 shows a compositional bias: polar residues; that stretch reads KSTNAVEQNNNSSQASVT. A compositionally biased stretch (basic residues) spans 49–67; it reads NKKKAAKRAKKKAAKKKKQ. Residues 92-103 show a composition bias toward polar residues; sequence TILQEPGFTQTI. Residues 134 to 145 show a composition bias toward low complexity; the sequence is PSASTSTAVPTT. The segment covering 146–155 has biased composition (polar residues); the sequence is EARNTSITEP. Over residues 156-177 the composition is skewed to low complexity; the sequence is ANSPSSSSSSASTKSTATTQSA. Phosphoserine occurs at positions 162 and 165. Position 168 is a phosphothreonine (threonine 168). A compositionally biased stretch (polar residues) spans 193-215; the sequence is QLGNSPASITSKPATTSAAQPSS. Serine 197 and serine 200 each carry phosphoserine. Residues 232–241 are compositionally biased toward basic and acidic residues; it reads AEKEIPELKP. Polar residues-rich tracts occupy residues 390-406, 413-432, and 488-508; these read QPEQ…TETV, VSST…TESE, and PSST…AQSS. The residue at position 396 (serine 396) is a Phosphoserine. Phosphoserine is present on residues serine 489 and serine 490. Threonine 491 bears the Phosphothreonine mark. Phosphoserine occurs at positions 515, 519, and 523. Residues 518–530 are compositionally biased toward low complexity; that stretch reads ASAPSSPGTTSAA. Residues 561-589 show a composition bias toward polar residues; the sequence is GSATTIPSPGSATTKPTPGSATTKPTPVS. Residues 596 to 613 show a composition bias toward low complexity; the sequence is AGTTKPAPAAGATATAEN. Residues 633 to 647 are compositionally biased toward basic residues; sequence SWFKRMKKSFGKLFH.

Its function is as follows. Has a role in meiosis and sporulation. The sequence is that of Meiotically up-regulated protein C8C9.04 from Schizosaccharomyces pombe (strain 972 / ATCC 24843) (Fission yeast).